A 200-amino-acid chain; its full sequence is Inner membrane-spanning protein YciB (200 aa).

The next 6 helical transmembrane spans lie at 7–27 (HPLFKLATELGPLIVFFVVNA), 32–52 (FAATGAFMVAIVAAMIASYVV), 56–76 (VPLMAIVTGIVVLVFGTLTLV), 93–113 (LFAAVLGGGLLFNRSFIAIMF), 126–146 (ILTFRWALFFAAMAVLNEIIW), and 153–173 (FWVGFKAFGVVPLTMIFAIAQ).

This sequence belongs to the YciB family.

It localises to the cell inner membrane. Plays a role in cell envelope biogenesis, maintenance of cell envelope integrity and membrane homeostasis. This Bradyrhizobium sp. (strain BTAi1 / ATCC BAA-1182) protein is Inner membrane-spanning protein YciB.